Here is a 256-residue protein sequence, read N- to C-terminus: Lysine-rich coiled-coil protein 1 (256 aa).

2 disordered regions span residues 62–84 (RLPSGTNHSYPRSCSSSQTEDRV) and 144–256 (TIDP…ILGF). Positions 64–79 (PSGTNHSYPRSCSSSQ) are enriched in polar residues. 2 stretches are compositionally biased toward basic and acidic residues: residues 161–188 (HVEEGREKQEERPKHERKRSSEEMDLNK) and 218–227 (KTRDVSSKKE). Positions 209 to 247 (EKLKNRKEKKTRDVSSKKEDRKRRKEKKEQGEERTEEEM) form a coiled coil.

The sequence is that of Lysine-rich coiled-coil protein 1 (Krcc1) from Mus musculus (Mouse).